Here is a 207-residue protein sequence, read N- to C-terminus: MRQFVVIGHDVPTDPDAISLSDIPGAGRLDLLCRCVAAGVFLSHGIRERVRVHLVVADEFTVTFDADSLRHLHPDERNVAARIRDALDAQDDAIGHMPADVSPGVELRRMGLEATLDRVLDTPGTSSASADPTLVQLHEDGDPLVDAAPPTDPVFVLSDHNDFAPAERDLLADRAERRVRVGPELLHADHTVSVVHNWLDTDGYESY.

Leu-137 is a binding site for S-adenosyl-L-methionine.

It belongs to the methyltransferase superfamily. TrmY family. As to quaternary structure, homodimer.

It localises to the cytoplasm. The catalysed reaction is pseudouridine(54) in tRNA + S-adenosyl-L-methionine = N(1)-methylpseudouridine(54) in tRNA + S-adenosyl-L-homocysteine + H(+). Its function is as follows. Specifically catalyzes the N1-methylation of pseudouridine at position 54 (Psi54) in tRNAs. This Halorubrum lacusprofundi (strain ATCC 49239 / DSM 5036 / JCM 8891 / ACAM 34) protein is tRNA (pseudouridine(54)-N(1))-methyltransferase.